Reading from the N-terminus, the 40-residue chain is Large ribosomal subunit protein bL36 (40 aa).

Belongs to the bacterial ribosomal protein bL36 family.

In Corynebacterium diphtheriae (strain ATCC 700971 / NCTC 13129 / Biotype gravis), this protein is Large ribosomal subunit protein bL36.